The following is a 718-amino-acid chain: Gephyrin (718 aa).

Residues 1–19 (MSNTLTTERNITNSPTAAQ) show a composition bias toward polar residues. Residues 1–26 (MSNTLTTERNITNSPTAAQLNEKESG) form a disordered region. Residues 31–176 (EWIVGVLTTS…LPGSVKAIRE (146 aa)) are MPT Mo-transferase. The segment covering 222-244 (NQNNQNNNNNNNNNNNNNNNNNS) has biased composition (low complexity). 2 disordered regions span residues 222–266 (NQNN…SSYN) and 344–364 (TGEN…NDDD). The span at 245–254 (HNHHHHHHHS) shows a compositional bias: basic residues. An MPT adenylyltransferase region spans residues 260–718 (KRGSSYNMTP…KAILIGPINN (459 aa)).

It in the N-terminal section; belongs to the MoaB/Mog family. The protein in the C-terminal section; belongs to the MoeA family. Homotrimer, homodimer and homooligomer. Requires Mg(2+) as cofactor.

Its subcellular location is the cell membrane. It is found in the cytoplasm. It localises to the cytosol. The protein localises to the cytoskeleton. It catalyses the reaction molybdopterin + ATP + H(+) = adenylyl-molybdopterin + diphosphate. It carries out the reaction adenylyl-molybdopterin + molybdate = Mo-molybdopterin + AMP + H(+). It participates in cofactor biosynthesis; molybdopterin biosynthesis. Its function is as follows. Microtubule-associated protein involved in membrane protein-cytoskeleton interactions. Functionally, also has a catalytic activity and catalyzes two steps in the biosynthesis of the molybdenum cofactor. In the first step, molybdopterin is adenylated. Subsequently, molybdate is inserted into adenylated molybdopterin and AMP is released. The protein is Gephyrin (gphn) of Dictyostelium discoideum (Social amoeba).